Here is a 239-residue protein sequence, read N- to C-terminus: Norbelladine 4'-O-methyltransferase (239 aa).

S-adenosyl-L-methionine contacts are provided by residues V55, E77, 79 to 80, S85, D103, and A132; that span reads GV. D155 is an a divalent metal cation binding site. D157 serves as a coordination point for S-adenosyl-L-methionine. A divalent metal cation contacts are provided by D181 and N182.

The protein belongs to the class I-like SAM-binding methyltransferase superfamily. Cation-dependent O-methyltransferase family. Requires Mg(2+) as cofactor. In terms of tissue distribution, highly expressed in bulbs. Detected in leaves and inflorescences.

The catalysed reaction is norbelladine + S-adenosyl-L-methionine = 4'-O-methylnorbelladine + S-adenosyl-L-homocysteine + H(+). Its pathway is alkaloid biosynthesis. In terms of biological role, 4'-O-methyltransferase converting norbelladine to 4'-O-methylnorbelladine. 4'-O-methylnorbelladine is a precursor to all Amaryllidaceae alkaloids such as galanthamine, lycorine and haemanthamine, and including haemanthamine- and crinamine-type alkaloids, promising anticancer agents. Can use norbelladine, N-methylnorbelladine and dopamine as substrate, but not caffeic acid, vanillin, 3,4-dihydroxybenzaldehyde and tyramine. The protein is Norbelladine 4'-O-methyltransferase of Narcissus aff. pseudonarcissus MK-2014 (Daffodil).